The chain runs to 145 residues: Arginine repressor (145 aa).

It belongs to the ArgR family.

Its subcellular location is the cytoplasm. Its pathway is amino-acid biosynthesis; L-arginine biosynthesis [regulation]. Regulates arginine biosynthesis genes. The polypeptide is Arginine repressor (Streptococcus equi subsp. zooepidemicus (strain H70)).